Consider the following 262-residue polypeptide: NADP-dependent mannitol dehydrogenase (262 aa).

4 residues coordinate NADP(+): Ile-23, Asp-69, Asn-96, and Arg-129. The active-site Proton donor is Ser-149. NADP(+) is bound by residues Tyr-169, Lys-173, Val-202, Thr-204, and Gln-206. Tyr-169 serves as the catalytic Proton acceptor. Catalysis depends on Lys-173, which acts as the Lowers pKa of active site Tyr.

Belongs to the short-chain dehydrogenases/reductases (SDR) family. As to quaternary structure, homotetramer.

It catalyses the reaction D-mannitol + NADP(+) = D-fructose + NADPH + H(+). This is NADP-dependent mannitol dehydrogenase (mtdH) from Agaricus bisporus (White button mushroom).